Consider the following 384-residue polypeptide: Substance-K receptor (384 aa).

The Extracellular segment spans residues 1 to 32 (MGGRAIVTDTNIFSGLESNTTGVTAFSMPAWQ). Asn19 carries N-linked (GlcNAc...) asparagine glycosylation. A helical transmembrane segment spans residues 33-56 (LALWATAYLGLVLVAVTGNATVIW). Residues 57-69 (IILAHERMRTVTN) lie on the Cytoplasmic side of the membrane. A helical membrane pass occupies residues 70–90 (YFIINLALADLCMAAFNATFN). The Extracellular segment spans residues 91–107 (FVYASHNIWYFGRAFCY). A disulfide bridge connects residues Cys106 and Cys181. A helical transmembrane segment spans residues 108–129 (FQNLFPITAMFVSIYSMTAIAA). Over 130–149 (DRYMAIVHPFQPRLSAPITK) the chain is Cytoplasmic. A helical membrane pass occupies residues 150-170 (ATIAGIWLVALALASPQCFYS). Over 171 to 196 (TITVDQGATKCVVAWPNDNGGKMLLL) the chain is Extracellular. A helical transmembrane segment spans residues 197 to 218 (YHLVVFVLVYFLPLVVMFVAYS). Residues 219–251 (VIGLTLWKRAVPRHQAHGANLRHLHAKKKFVKA) are Cytoplasmic-facing. Residues 252–272 (MVLVVLTFAICWLPYHLYFIL) form a helical membrane-spanning segment. Residues 273–290 (GSFQKDIYYRKFIQQVYL) lie on the Extracellular side of the membrane. The chain crosses the membrane as a helical span at residues 291 to 310 (ALFWLAMSSTMYNPIIYCCL). At 311–384 (NHRFRSGFRL…SPQDVEPAAP (74 aa)) the chain is on the cytoplasmic side. Cys324 carries the S-palmitoyl cysteine lipid modification.

This sequence belongs to the G-protein coupled receptor 1 family.

It is found in the cell membrane. Functionally, this is a receptor for the tachykinin neuropeptide substance K (neurokinin A). It is associated with G proteins that activate a phosphatidylinositol-calcium second messenger system. The rank order of affinity of this receptor to tachykinins is: substance K &gt; neuromedin-K &gt; substance P. This is Substance-K receptor (TACR2) from Mesocricetus auratus (Golden hamster).